Reading from the N-terminus, the 935-residue chain is Epstein-Barr nuclear antigen 3 (935 aa).

Disordered regions lie at residues 1-89 (MDKD…DLPG), 342-373 (HVEGATGETREESEDTESDGDDEDLPCIVSRG), 399-446 (TEQG…VPEP), 611-634 (KQASVEVQPPQVTQVSPQQPMEGP), and 883-908 (HGRPRPRTPEWPVQGESGQNVTDHEP). Positions 10 to 19 (ALDDNMEEEV) are enriched in acidic residues. Over residues 20–29 (PSTSVVQEQV) the composition is skewed to polar residues. Residues 352–366 (EESEDTESDGDDEDL) are compositionally biased toward acidic residues. Positions 399 to 410 (TEQGKEVLEKAR) are enriched in basic and acidic residues. Positions 431-440 (SDETATSHGS) are enriched in polar residues. Residues 615–630 (VEVQPPQVTQVSPQQP) are compositionally biased toward low complexity.

Belongs to the herpesviridae EBNA-3 family. As to quaternary structure, interacts with human UCKL1. Interacts with host CTPB1; this interaction seems important for EBNA3-mediated transcriptional repression. Interacts with host RBPJ. Interacts with host USP12 and WDR48; these interactions form a deubiquitination-competent complex.

The protein resides in the host nucleus matrix. Plays an essential role for activation and immortalization of human B-cells. Represses transcription of viral promoters TP1 and Cp through interaction with host RBPJ, and inhibits EBNA2-mediated activation of these promoters. Since Cp is the promoter for all EBNA mRNAs, EBNA3A probably contributes to a negative autoregulatory control loop. This is Epstein-Barr nuclear antigen 3 (EBNA3) from Homo sapiens (Human).